A 545-amino-acid polypeptide reads, in one-letter code: Carboxypeptidase Y homolog A (545 aa).

The N-terminal stretch at 1–17 (MKSLALALLVGGAIAAG) is a signal peptide. A propeptide spanning residues 18-123 (PQQQVLQAPV…KLEAYDLRVK (106 aa)) is cleaved from the precursor. 5 disulfides stabilise this stretch: Cys-177–Cys-416, Cys-311–Cys-325, Cys-335–Cys-358, Cys-342–Cys-351, and Cys-380–Cys-386. Asn-208 is a glycosylation site (N-linked (GlcNAc...) asparagine). Ser-264 is an active-site residue. The active site involves Asp-455. Residues Asn-485, Asn-491, and Asn-506 are each glycosylated (N-linked (GlcNAc...) asparagine). Residue His-517 is part of the active site.

The protein belongs to the peptidase S10 family.

It is found in the vacuole. The catalysed reaction is Release of a C-terminal amino acid with broad specificity.. Its function is as follows. Vacuolar carboxypeptidase involved in degradation of small peptides. Digests preferentially peptides containing an aliphatic or hydrophobic residue in P1' position, as well as methionine, leucine or phenylalanine in P1 position of ester substrate. This chain is Carboxypeptidase Y homolog A (CPYA), found in Blastomyces gilchristii (strain SLH14081) (Blastomyces dermatitidis).